We begin with the raw amino-acid sequence, 542 residues long: MESQRNILLIGLLFVSFLLWQQWQADKAPQPVAQTQSSVAPSTVADAHSSDVPDADSALPETVTASKELITVTTDQFVLKIDPVGGDIVHSALLSHKLEQDGDDPFVLLEQTNDIYYIAQSGLIGRDGIDSSTTGRAHFDSASREYDLAGQDTLEVPLTYLAANGVTYTKLFTFYRGKHNVDVDYQINNTSDAQLQVQMYGQIKHSIKKSESSMMMPTYRGAAFSTADTRYEKYSFDDMADKNLNKSTLGGWVAMLQHYFVSAWVPPENDKNIIFSSVSAGGLANIGFRGALYDIAPGTEQSIKAQFYVGPKDQEALSALSESLNLVVDYGFLWWLAIPIHWLLMFYQSFVGNWGVAIILITLTVRGMLYPLTKAQYTSMAKMRNLQPKLADMKERFGDDRQKMGQAMMELYKKEKVNPMGGCLPILLQMPIFIALYWVLLESYELRHAPFMLWITDLSVQDPYYVMPILMGVSMFIMQKMQPMAPTMDPMQVKMMQWMPVIFTVFFLWFPAGLVLYWLVGNLVAITQQKIIYAGLEKKGLK.

The chain crosses the membrane as a helical span at residues 6 to 26 (NILLIGLLFVSFLLWQQWQAD). Residues 32-41 (VAQTQSSVAP) are compositionally biased toward polar residues. Residues 32-57 (VAQTQSSVAPSTVADAHSSDVPDADS) form a disordered region. The next 5 helical transmembrane spans lie at 326-346 (LVVDYGFLWWLAIPIHWLLMF), 350-370 (FVGNWGVAIILITLTVRGMLY), 421-441 (GGCLPILLQMPIFIALYWVLL), 458-478 (LSVQDPYYVMPILMGVSMFIM), and 501-521 (VIFTVFFLWFPAGLVLYWLVG).

This sequence belongs to the OXA1/ALB3/YidC family. Type 1 subfamily. As to quaternary structure, interacts with the Sec translocase complex via SecD. Specifically interacts with transmembrane segments of nascent integral membrane proteins during membrane integration.

The protein resides in the cell inner membrane. Its function is as follows. Required for the insertion and/or proper folding and/or complex formation of integral membrane proteins into the membrane. Involved in integration of membrane proteins that insert both dependently and independently of the Sec translocase complex, as well as at least some lipoproteins. Aids folding of multispanning membrane proteins. The sequence is that of Membrane protein insertase YidC from Shewanella piezotolerans (strain WP3 / JCM 13877).